The sequence spans 447 residues: Argininosuccinate synthase (447 aa).

Residues 17-25 and alanine 43 each bind ATP; that span reads AFSGGLDTS. Tyrosine 99 lines the L-citrulline pocket. ATP-binding residues include glycine 129 and threonine 131. Residues threonine 131, asparagine 135, and aspartate 136 each contribute to the L-aspartate site. Asparagine 135 is a binding site for L-citrulline. Aspartate 136 provides a ligand contact to ATP. Residues arginine 139 and serine 192 each coordinate L-citrulline. Aspartate 194 is an ATP binding site. L-citrulline is bound by residues threonine 201, glutamate 203, and glutamate 280.

Belongs to the argininosuccinate synthase family. Type 2 subfamily. In terms of assembly, homotetramer.

Its subcellular location is the cytoplasm. It catalyses the reaction L-citrulline + L-aspartate + ATP = 2-(N(omega)-L-arginino)succinate + AMP + diphosphate + H(+). The protein operates within amino-acid biosynthesis; L-arginine biosynthesis; L-arginine from L-ornithine and carbamoyl phosphate: step 2/3. The polypeptide is Argininosuccinate synthase (Klebsiella pneumoniae (strain 342)).